A 286-amino-acid chain; its full sequence is Ribosomal RNA small subunit methyltransferase A (286 aa).

S-adenosyl-L-methionine is bound by residues Asn28, Leu30, Gly55, Glu77, Asp103, and Asn123.

The protein belongs to the class I-like SAM-binding methyltransferase superfamily. rRNA adenine N(6)-methyltransferase family. RsmA subfamily.

Its subcellular location is the cytoplasm. It carries out the reaction adenosine(1518)/adenosine(1519) in 16S rRNA + 4 S-adenosyl-L-methionine = N(6)-dimethyladenosine(1518)/N(6)-dimethyladenosine(1519) in 16S rRNA + 4 S-adenosyl-L-homocysteine + 4 H(+). In terms of biological role, specifically dimethylates two adjacent adenosines (A1518 and A1519) in the loop of a conserved hairpin near the 3'-end of 16S rRNA in the 30S particle. May play a critical role in biogenesis of 30S subunits. This is Ribosomal RNA small subunit methyltransferase A from Rhodopseudomonas palustris (strain BisB18).